We begin with the raw amino-acid sequence, 74 residues long: Fulgimotoxin (74 aa).

Gln-1 is modified (pyrrolidone carboxylic acid). Intrachain disulfides connect Cys-10–Cys-34, Cys-13–Cys-21, Cys-27–Cys-51, Cys-55–Cys-66, and Cys-67–Cys-72.

This sequence belongs to the three-finger toxin family. Ancestral subfamily. Boigatoxin sub-subfamily. In terms of assembly, monomer. The N-terminus is blocked. In terms of processing, contains 5 disulfide bonds. Expressed by the venom gland.

It is found in the secreted. Reptile-specific three-finger toxin that is lethal at low doses for lizards, but not for mice. Probably acts as a neurotoxin. The sequence is that of Fulgimotoxin from Oxybelis fulgidus (Green vine snake).